The following is a 146-amino-acid chain: MLTNVEIQNIIPHKYPFLLIDKILEVEPGKRAVGIKNVTINEPFFQGHFPGNPIMPGVLIVEALAQTACVAGLMLEENKGKLGVFTGIESMKFRRQVVPGDTLRLEAEFLAFKLGMGKAKVVATVDGEVAAEGQIKFAMIDTNKKA.

Histidine 48 is a catalytic residue.

It belongs to the thioester dehydratase family. FabZ subfamily.

It is found in the cytoplasm. The catalysed reaction is a (3R)-hydroxyacyl-[ACP] = a (2E)-enoyl-[ACP] + H2O. Involved in unsaturated fatty acids biosynthesis. Catalyzes the dehydration of short chain beta-hydroxyacyl-ACPs and long chain saturated and unsaturated beta-hydroxyacyl-ACPs. The polypeptide is 3-hydroxyacyl-[acyl-carrier-protein] dehydratase FabZ (Acetivibrio thermocellus (strain ATCC 27405 / DSM 1237 / JCM 9322 / NBRC 103400 / NCIMB 10682 / NRRL B-4536 / VPI 7372) (Clostridium thermocellum)).